The following is a 260-amino-acid chain: uncharacterized protein (260 aa).

This is an uncharacterized protein from Bacillus subtilis (strain 168).